A 248-amino-acid chain; its full sequence is tRNA N(3)-methylcytidine methyltransferase trm141 (248 aa).

S-adenosyl-L-methionine contacts are provided by tryptophan 23, tyrosine 27, glycine 63, aspartate 86, aspartate 112, and isoleucine 133.

It belongs to the methyltransferase superfamily. METL family.

It localises to the cytoplasm. It is found in the nucleus. It carries out the reaction cytidine(32) in tRNA(Ser) + S-adenosyl-L-methionine = N(3)-methylcytidine(32) in tRNA(Ser) + S-adenosyl-L-homocysteine + H(+). In terms of biological role, S-adenosyl-L-methionine-dependent methyltransferase that mediates N(3)-methylcytidine modification of residue 32 of the tRNA anticodon loop of tRNA(Ser). N(3)-methylcytidine methylation by trm141 requires the formation of N(6)-dimethylallyladenosine(37) (i6A37) by tit1 as prerequisite. Does not catalyze N(3)-methylcytidine modification of tRNA(Thr). This Schizosaccharomyces pombe (strain 972 / ATCC 24843) (Fission yeast) protein is tRNA N(3)-methylcytidine methyltransferase trm141.